A 566-amino-acid polypeptide reads, in one-letter code: Arginine--tRNA ligase (566 aa).

The 'HIGH' region motif lies at 121 to 131; the sequence is ANPNGPFHIGH.

It belongs to the class-I aminoacyl-tRNA synthetase family.

It is found in the cytoplasm. It carries out the reaction tRNA(Arg) + L-arginine + ATP = L-arginyl-tRNA(Arg) + AMP + diphosphate. The protein is Arginine--tRNA ligase of Methanococcus maripaludis (strain C5 / ATCC BAA-1333).